The primary structure comprises 1035 residues: FACT complex subunit SPT16 (1035 aa).

The stretch at 432–500 (FLKKEDEEEE…AKRRLTEQKG (69 aa)) forms a coiled coil. Disordered regions lie at residues 491 to 520 (AKRR…ASQV) and 920 to 1035 (EQGG…KRKK). Over residues 499–519 (KGGQQTMKARKSNVSYKNASQ) the composition is skewed to polar residues. Positions 929–985 (PDGEGSDAAEGDSESELDDETFNPSEDEEEEEEDSDEDYSDETEDSVDSEESADSEE) are enriched in acidic residues. A compositionally biased stretch (basic and acidic residues) spans 986–1006 (ESGKDWDELEEEARKADRESL).

The protein belongs to the peptidase M24 family. SPT16 subfamily. Component of the FACT complex (also called the DUF complex), a stable heterodimer of ssrp1 and supt16h. May also be a component of a ck2-spt16-ssrp1 complex composed of ssrp1, supt16h, csnk2a1, csnk2a2 and csnk2b. The FACT complex may also interact with vcp.

It is found in the nucleus. It localises to the chromosome. Its function is as follows. Component of the FACT complex, a general chromatin factor that acts to reorganize nucleosomes. The FACT complex is involved in multiple processes that require DNA as a template such as mRNA elongation, DNA replication and DNA repair. During transcription elongation the FACT complex acts as a histone chaperone that both destabilizes and restores nucleosomal structure. It facilitates the passage of RNA polymerase II and transcription by promoting the dissociation of one histone H2A-H2B dimer from the nucleosome, then subsequently promotes the reestablishment of the nucleosome following the passage of RNA polymerase II. The sequence is that of FACT complex subunit SPT16 (supt16h) from Xenopus laevis (African clawed frog).